We begin with the raw amino-acid sequence, 750 residues long: MIIRSPEPEVKIVVDRDPVKTSFEEWARPGHFSRTLAKGPDTTTWIWNLHADAHDFDSHTGDLEEISRKVFSAHFGQLSIIFLWLSGMYFHGARFSNYEAWLSDPTHIGPSAQVVWPIVGQEILNGDVGGGFRGIQITSGFFQLWRASGITSELQLYCTAIGALVFAALMLFAGWFHYHKAAPKLAWFQDVESMLNHHLAGLLGLGSLSWAGHQIHVSLPINQFLDAGVDPKEIPLPHEFILNRDLLAQLYPSFAEGATPFFTLNWSKYAEFLTFRGGLDPVTGGLWLTDIAHHHLAIAILFLIAGHMYRTNWGIGHGLKDILEAHKGPFTGQGHKGLYEILTTSWHAQLSLNLAMLGSTTIVVAHHMYSMPPYPYLATDYGTQLSLFTHHMWIGGFLIVGAAAHAAIFMVRDYDPTTRYNDLLDRVLRHRDAIISHLNWVCIFLGFHSFGLYIHNDTMSALGRPQDMFSDTAIQLQPIFAQWVQNIHATAPGVTAPGATTSTSLTWGGGELVAVGGKVALLPIPLGTADFLVHHIHAFTIHVTVLILLKGVLFARSSRLIPDKANLGFRFPCDGPGRGGTCQVSAWDHVFLGLFWMYNAISVVIFHFSWKMQSDVWGTISDQGVVTHITGGNFAQSSITINGWLRDFLWAQASQVIQSYGSSLSAYGLFFLGAHFVWAFSLMFLFSGRGYWQELIESIVWAHNKLKVAPATQPRALSIIQGRAVGVTHYLLGGIATTWAFFLARIIAVG.

Transmembrane regions (helical) follow at residues 70–93, 156–179, 195–219, 291–309, 346–369, 385–411, 433–455, and 531–549; these read VFSAHFGQLSIIFLWLSGMYFHGA, LYCTAIGALVFAALMLFAGWFHYH, LNHHLAGLLGLGSLSWAGHQIHVSL, IAHHHLAIAILFLIAGHMY, WHAQLSLNLAMLGSTTIVVAHHMY, LSLFTHHMWIGGFLIVGAAAHAAIFMV, AIISHLNWVCIFLGFHSFGLYIH, and FLVHHIHAFTIHVTVLILL. Positions 573 and 582 each coordinate [4Fe-4S] cluster. 2 helical membrane passes run 589–610 and 664–686; these read HVFLGLFWMYNAISVVIFHFSW and LSAYGLFFLGAHFVWAFSLMFLF. Chlorophyll a' is bound at residue His675. Chlorophyll a contacts are provided by Met683 and Tyr691. Phylloquinone is bound at residue Trp692. Residues 724 to 744 traverse the membrane as a helical segment; the sequence is AVGVTHYLLGGIATTWAFFLA.

It belongs to the PsaA/PsaB family. As to quaternary structure, the PsaA/B heterodimer binds the P700 chlorophyll special pair and subsequent electron acceptors. PSI consists of a core antenna complex that captures photons, and an electron transfer chain that converts photonic excitation into a charge separation. The eukaryotic PSI reaction center is composed of at least 11 subunits. It depends on P700 is a chlorophyll a/chlorophyll a' dimer, A0 is one or more chlorophyll a, A1 is one or both phylloquinones and FX is a shared 4Fe-4S iron-sulfur center. as a cofactor.

It is found in the plastid. The protein resides in the chloroplast thylakoid membrane. The enzyme catalyses reduced [plastocyanin] + hnu + oxidized [2Fe-2S]-[ferredoxin] = oxidized [plastocyanin] + reduced [2Fe-2S]-[ferredoxin]. Its function is as follows. PsaA and PsaB bind P700, the primary electron donor of photosystem I (PSI), as well as the electron acceptors A0, A1 and FX. PSI is a plastocyanin-ferredoxin oxidoreductase, converting photonic excitation into a charge separation, which transfers an electron from the donor P700 chlorophyll pair to the spectroscopically characterized acceptors A0, A1, FX, FA and FB in turn. Oxidized P700 is reduced on the lumenal side of the thylakoid membrane by plastocyanin. The chain is Photosystem I P700 chlorophyll a apoprotein A1 from Hordeum vulgare (Barley).